We begin with the raw amino-acid sequence, 275 residues long: Large ribosomal subunit protein uL2 (275 aa).

The tract at residues 219 to 263 is disordered; that stretch reads EVRGAAMNPRDHPHGGGEGRAPRGMPTPKTKWGKPARGVKTRHNP. Positions 227–239 are enriched in basic and acidic residues; it reads PRDHPHGGGEGRA. The segment covering 249–262 has biased composition (basic residues); sequence KWGKPARGVKTRHN.

It belongs to the universal ribosomal protein uL2 family. As to quaternary structure, part of the 50S ribosomal subunit. Forms a bridge to the 30S subunit in the 70S ribosome.

Its function is as follows. One of the primary rRNA binding proteins. Required for association of the 30S and 50S subunits to form the 70S ribosome, for tRNA binding and peptide bond formation. It has been suggested to have peptidyltransferase activity; this is somewhat controversial. Makes several contacts with the 16S rRNA in the 70S ribosome. This chain is Large ribosomal subunit protein uL2, found in Roseiflexus castenholzii (strain DSM 13941 / HLO8).